Consider the following 516-residue polypeptide: uncharacterized protein (516 aa).

To H.influenzae HI_0521.

This is an uncharacterized protein from Escherichia coli (strain K12).